A 277-amino-acid chain; its full sequence is Phosphoribosylaminoimidazole-succinocarboxamide synthase (277 aa).

The protein belongs to the SAICAR synthetase family.

It carries out the reaction 5-amino-1-(5-phospho-D-ribosyl)imidazole-4-carboxylate + L-aspartate + ATP = (2S)-2-[5-amino-1-(5-phospho-beta-D-ribosyl)imidazole-4-carboxamido]succinate + ADP + phosphate + 2 H(+). It functions in the pathway purine metabolism; IMP biosynthesis via de novo pathway; 5-amino-1-(5-phospho-D-ribosyl)imidazole-4-carboxamide from 5-amino-1-(5-phospho-D-ribosyl)imidazole-4-carboxylate: step 1/2. The polypeptide is Phosphoribosylaminoimidazole-succinocarboxamide synthase (Salinispora arenicola (strain CNS-205)).